Here is a 627-residue protein sequence, read N- to C-terminus: MSNHRSNFRDYQREGIRANNAGTSGDAVRQNGNPISVAKHVDGKKSVYMLFLRQIGQKKFLTEQGHRYNQNDQADKDIMTRYYHGMCPDLKQKFEREVAEHNGNRGLVIKTKHQRAQRNREMRHRNPDEFQQLRRAHLETLSQTPSVIALPRDINHVLHITEDLDAFCLANRKKAKRIMTSYIAQRSDDPGNPLLCEDYTMQIVSVFPVAYAFKPSINKLSSYPAEISVTTFNLKNGIIQNESRFVKFDAAWFYPDADDIGHEELSRKAMADELGISPNGPADGCEPYEVFEWLQHLLKQHPKSPILCDRAQFNFVYYGIKTLATYTGINAITFFQEVIIPSILSIQDFTSVILEKAPTDVPRVWRDVDICNQFQYHFLIPRTELNLFCSFHENKPSPTKYNCVKAHNARLLDNFFTVIKGNRLQGFVISPPVHEICIQDGSDTSLPQTILARTISRNDAEVYAARQRDTDEQYDVHQEGPSNHDQYEFASEPLDFEEDSDEENYNEQLDVPYSYNDHFISSSSVREPEHPSARSRDVAPNVQQESVVVPAPRRLSPQRAPRPSQNSPNAYSERKSFSAFPSEDPSEDYETPIISHIMNRNEADQYFNILDSVKPGQKYKIIKFDDF.

Disordered regions lie at residues 1-31, 467-487, and 523-589; these read MSNHRSNFRDYQREGIRANNAGTSGDAVRQN, QRDTDEQYDVHQEGPSNHDQY, and SSVR…SEDY. Basic and acidic residues-rich tracts occupy residues 7 to 16, 467 to 478, and 526 to 537; these read NFRDYQREGI, QRDTDEQYDVHQ, and REPEHPSARSRD.

This sequence belongs to the maelstrom family. As to quaternary structure, interacts with rde-11 (via RING-type zinc finger domain). Interacts with ergo-1.

In complex with rde-11, required in the endogenous and exogenous siRNA pathway for biogenesis and accumulation of secondary small interfering RNA (siRNA) intermediates, such as 22G-siRNAs derived from ergo-1 targets. The protein is RNA interference defective protein 10 of Caenorhabditis elegans.